The sequence spans 47 residues: Delta-ctenitoxin-Asp2e (47 aa).

Cystine bridges form between Cys-3–Cys-17, Cys-10–Cys-23, Cys-14–Cys-46, Cys-16–Cys-31, and Cys-25–Cys-29.

As to expression, expressed by the venom gland.

It is found in the secreted. Functionally, inhibits the inactivation of voltage-gated sodium channels (Nav). The sequence is that of Delta-ctenitoxin-Asp2e from Ancylometes sp. (South American fishing spider).